Reading from the N-terminus, the 184-residue chain is UPF0301 protein RSKD131_2391 (184 aa).

The protein belongs to the UPF0301 (AlgH) family.

In Cereibacter sphaeroides (strain KD131 / KCTC 12085) (Rhodobacter sphaeroides), this protein is UPF0301 protein RSKD131_2391.